A 448-amino-acid polypeptide reads, in one-letter code: Trigger factor (448 aa).

Positions 173–258 constitute a PPIase FKBP-type domain; the sequence is SDRVTIDFVG…LKQIEWAHMP (86 aa).

This sequence belongs to the FKBP-type PPIase family. Tig subfamily.

It is found in the cytoplasm. The enzyme catalyses [protein]-peptidylproline (omega=180) = [protein]-peptidylproline (omega=0). Its function is as follows. Involved in protein export. Acts as a chaperone by maintaining the newly synthesized protein in an open conformation. Functions as a peptidyl-prolyl cis-trans isomerase. In Herminiimonas arsenicoxydans, this protein is Trigger factor.